A 351-amino-acid polypeptide reads, in one-letter code: Histidinol-phosphate aminotransferase (351 aa).

An N6-(pyridoxal phosphate)lysine modification is found at Lys-221.

This sequence belongs to the class-II pyridoxal-phosphate-dependent aminotransferase family. Histidinol-phosphate aminotransferase subfamily. As to quaternary structure, homodimer. Pyridoxal 5'-phosphate serves as cofactor.

It carries out the reaction L-histidinol phosphate + 2-oxoglutarate = 3-(imidazol-4-yl)-2-oxopropyl phosphate + L-glutamate. It functions in the pathway amino-acid biosynthesis; L-histidine biosynthesis; L-histidine from 5-phospho-alpha-D-ribose 1-diphosphate: step 7/9. This Staphylococcus haemolyticus (strain JCSC1435) protein is Histidinol-phosphate aminotransferase.